Consider the following 320-residue polypeptide: Lipoyl synthase (320 aa).

The span at Met-1 to Pro-11 shows a compositional bias: polar residues. The segment at Met-1–Pro-24 is disordered. The span at Glu-14 to Pro-24 shows a compositional bias: basic and acidic residues. Cys-53, Cys-58, Cys-64, Cys-79, Cys-83, Cys-86, and Ser-293 together coordinate [4Fe-4S] cluster. Residues Trp-65–Leu-282 enclose the Radical SAM core domain.

Belongs to the radical SAM superfamily. Lipoyl synthase family. The cofactor is [4Fe-4S] cluster.

The protein resides in the cytoplasm. The enzyme catalyses [[Fe-S] cluster scaffold protein carrying a second [4Fe-4S](2+) cluster] + N(6)-octanoyl-L-lysyl-[protein] + 2 oxidized [2Fe-2S]-[ferredoxin] + 2 S-adenosyl-L-methionine + 4 H(+) = [[Fe-S] cluster scaffold protein] + N(6)-[(R)-dihydrolipoyl]-L-lysyl-[protein] + 4 Fe(3+) + 2 hydrogen sulfide + 2 5'-deoxyadenosine + 2 L-methionine + 2 reduced [2Fe-2S]-[ferredoxin]. It participates in protein modification; protein lipoylation via endogenous pathway; protein N(6)-(lipoyl)lysine from octanoyl-[acyl-carrier-protein]: step 2/2. Its function is as follows. Catalyzes the radical-mediated insertion of two sulfur atoms into the C-6 and C-8 positions of the octanoyl moiety bound to the lipoyl domains of lipoate-dependent enzymes, thereby converting the octanoylated domains into lipoylated derivatives. This chain is Lipoyl synthase, found in Erythrobacter litoralis (strain HTCC2594).